A 493-amino-acid polypeptide reads, in one-letter code: Probable cytochrome P450 CYP36A1 (493 aa).

Helical transmembrane passes span 1–21, 60–80, and 290–310; these read MLFA…CRFA, GGIF…YDML, and QLIV…IIVL. C440 lines the heme pocket.

The protein belongs to the cytochrome P450 family. It depends on heme as a cofactor.

The protein localises to the membrane. Cytochromes P450 are a group of heme-thiolate monooxygenases. They oxidize a variety of structurally unrelated compounds, including steroids, fatty acids, and xenobiotics. In Caenorhabditis elegans, this protein is Probable cytochrome P450 CYP36A1 (cyp-36A1).